The sequence spans 73 residues: Conotoxin CnIIIE (73 aa).

Residues 1-19 (MSKLGVLLTICLLLFPLTA) form the signal peptide. The propeptide occupies 20–49 (LPMDGDQSVDRPAERMQDDISSEQYPLFNQ). Cystine bridges form between Cys53/Cys72, Cys54/Cys70, and Cys60/Cys73.

This sequence belongs to the conotoxin M superfamily. Expressed by the venom duct.

It localises to the secreted. Its function is as follows. Shows a paralytic effect in fish. This Conus consors (Singed cone) protein is Conotoxin CnIIIE.